A 245-amino-acid polypeptide reads, in one-letter code: Tetrahydromethanopterin S-methyltransferase subunit A 1 (245 aa).

The Cytoplasmic portion of the chain corresponds to 1-222; it reads MADKKPAADN…AGNYSGKVQG (222 aa). Histidine 84 is a 5-hydroxybenzimidazolylcob(I)amide binding site. Residues 223-243 form a helical membrane-spanning segment; that stretch reads IMIGLIFTLVIGFLLLMAPLL. Topologically, residues 244 to 245 are extracellular; the sequence is GA.

This sequence belongs to the MtrA family. The complex is composed of 8 subunits; MtrA, MtrB, MtrC, MtrD, MtrE, MtrF, MtrG and MtrH. Requires 5-hydroxybenzimidazolylcob(I)amide as cofactor.

It is found in the cell membrane. It catalyses the reaction 5-methyl-5,6,7,8-tetrahydromethanopterin + coenzyme M + 2 Na(+)(in) = 5,6,7,8-tetrahydromethanopterin + methyl-coenzyme M + 2 Na(+)(out). The protein operates within one-carbon metabolism; methanogenesis from CO(2); methyl-coenzyme M from 5,10-methylene-5,6,7,8-tetrahydromethanopterin: step 2/2. Functionally, part of a complex that catalyzes the formation of methyl-coenzyme M and tetrahydromethanopterin from coenzyme M and methyl-tetrahydromethanopterin. This is an energy-conserving, sodium-ion translocating step. This chain is Tetrahydromethanopterin S-methyltransferase subunit A 1, found in Methanobrevibacter ruminantium (strain ATCC 35063 / DSM 1093 / JCM 13430 / OCM 146 / M1) (Methanobacterium ruminantium).